We begin with the raw amino-acid sequence, 199 residues long: Ribonuclease HII (199 aa).

The 188-residue stretch at 12–199 folds into the RNase H type-2 domain; the sequence is DLLAGTDEAG…FGPVKKILEG (188 aa). 3 residues coordinate a divalent metal cation: D18, E19, and D110.

This sequence belongs to the RNase HII family. Mn(2+) is required as a cofactor. Requires Mg(2+) as cofactor.

The protein resides in the cytoplasm. It carries out the reaction Endonucleolytic cleavage to 5'-phosphomonoester.. In terms of biological role, endonuclease that specifically degrades the RNA of RNA-DNA hybrids. This is Ribonuclease HII from Marinomonas sp. (strain MWYL1).